A 1010-amino-acid polypeptide reads, in one-letter code: Contactin-1 (1010 aa).

The first 19 residues, 1–19 (MRFFISHLVTLCFIFCVAD), serve as a signal peptide directing secretion. 6 Ig-like C2-type domains span residues 33–123 (PVFE…ATLS), 132–215 (PEEH…KSVF), 232–317 (PADI…ARVY), 322–398 (PEWV…AELK), 404–491 (PTFE…GVLE), and 496–592 (TRIT…LVVR). 2 disulfides stabilise this stretch: Cys-57–Cys-106 and Cys-150–Cys-203. Asn-200 and Asn-249 each carry an N-linked (GlcNAc...) asparagine glycan. A disulfide bond links Cys-254 and Cys-301. Asn-329 carries N-linked (GlcNAc...) asparagine glycosylation. Disulfide bonds link Cys-343–Cys-382 and Cys-427–Cys-475. N-linked (GlcNAc...) asparagine glycans are attached at residues Asn-448, Asn-464, Asn-485, and Asn-512. Cys-517 and Cys-574 are oxidised to a cystine. Asn-582 carries N-linked (GlcNAc...) asparagine glycosylation. Fibronectin type-III domains follow at residues 597 to 695 (PPGG…TEGA), 700 to 797 (APSD…SAQD), 802 to 897 (VPTD…APPS), and 899 to 990 (RPRI…TAGV). Polar residues predominate over residues 679-689 (GTGEPSMPSQR). Positions 679–708 (GTGEPSMPSQRIRTEGAPPNVAPSDVGGGG) are disordered. A glycan (N-linked (GlcNAc...) asparagine) is linked at Asn-924. Ser-984 carries the GPI-anchor amidated serine lipid modification. Positions 985 to 1010 (GATAGVPTLLLGLVLPALGVLAYSGF) are cleaved as a propeptide — removed in mature form.

It belongs to the immunoglobulin superfamily. Contactin family. As to quaternary structure, interacts with TNR.

It localises to the cell membrane. Its function is as follows. Mediates cell surface interactions during nervous system development. Interaction with TNR enhances the neurite outgrowth. This chain is Contactin-1 (CNTN1), found in Gallus gallus (Chicken).